A 148-amino-acid polypeptide reads, in one-letter code: Endoribonuclease YbeY (148 aa).

Positions 102, 106, and 112 each coordinate Zn(2+).

This sequence belongs to the endoribonuclease YbeY family. The cofactor is Zn(2+).

It localises to the cytoplasm. In terms of biological role, single strand-specific metallo-endoribonuclease involved in late-stage 70S ribosome quality control and in maturation of the 3' terminus of the 16S rRNA. The sequence is that of Endoribonuclease YbeY from Phytoplasma mali (strain AT).